Consider the following 602-residue polypeptide: Alpha-glucosides permease MPH3 (602 aa).

Residues 1 to 106 (MKNLSFLINR…AAAWSLLVST (106 aa)) lie on the Cytoplasmic side of the membrane. A helical transmembrane segment spans residues 107–127 (TLIMEGYDTAILGAFYALPIF). The Extracellular portion of the chain corresponds to 128–142 (QRKFGSQNDKTGEWE). A helical membrane pass occupies residues 143–163 (ISASWQIGLTLCYMAGEIVGL). Residues 164–178 (QLTGPSVDLVGNRYT) are Cytoplasmic-facing. A helical membrane pass occupies residues 179-199 (LIIALFFLAAFTFILYFCNSL). Gly200 is a topological domain (extracellular). The helical transmembrane segment at 201–221 (MIAVGQALCGMPWGCFQCLTV) threads the bilayer. The Cytoplasmic segment spans residues 222–234 (SYASEICPLALRY). The helical transmembrane segment at 235–255 (YLTTYSNLCWLFGQLFAAGIM) threads the bilayer. Over 256–270 (KNSQKKYADSELGYK) the chain is Extracellular. Residues 271-291 (LPFALQWILPVPLALGIFFAP) traverse the membrane as a helical segment. The Cytoplasmic segment spans residues 292–363 (ESPWWLVKKG…EDKINRRRTR (72 aa)). Residues 364–384 (ITCLCWAGQATCGSILIGYST) traverse the membrane as a helical segment. At 385–397 (YFYEKAGVSTEMS) the chain is on the extracellular side. The chain crosses the membrane as a helical span at residues 398 to 418 (FTFSIIQYCLGICATFLSWWA). At 419-426 (SKYFGRYD) the chain is on the cytoplasmic side. A helical membrane pass occupies residues 427–447 (LYAFGLAFQTIVFFIIGGLGC). At 448–459 (SSTHGSKMGSGS) the chain is on the extracellular side. A helical transmembrane segment spans residues 460–480 (LLMAVAFFYNLGIAPVVFCLV). Topologically, residues 481 to 492 (SEMPSSRLRTKT) are cytoplasmic. The helical transmembrane segment at 493–513 (IILARNTYNVVSIICSVLILY) threads the bilayer. At 514 to 525 (QLNSKKWNWGAK) the chain is on the extracellular side. A helical membrane pass occupies residues 526–546 (SGFFWGVLCFCTLIWAVVDLP). The Cytoplasmic segment spans residues 547 to 602 (ETAGKTFVEINELFKLGVSARKFKSTKVDPFVVKNTPKYVSHNDPKGDIEASIAEE).

It belongs to the major facilitator superfamily. Sugar transporter (TC 2.A.1.1) family.

It localises to the cell membrane. Its function is as follows. High-affinity uptake of maltose and maltotriose. Also transports alpha-methylglucoside, glucose and turanose but not melezitose or trehalose. In Saccharomyces cerevisiae (strain YJM789) (Baker's yeast), this protein is Alpha-glucosides permease MPH3 (MPH3).